The sequence spans 112 residues: uncharacterized protein (112 aa).

A helical membrane pass occupies residues 75-95 (ILGVFGGFIYILTPLPIVSGF).

The protein resides in the membrane. This is an uncharacterized protein from Methanocaldococcus jannaschii (strain ATCC 43067 / DSM 2661 / JAL-1 / JCM 10045 / NBRC 100440) (Methanococcus jannaschii).